Here is a 465-residue protein sequence, read N- to C-terminus: MDHQQPIQVIGGGLAGTEAAWQIAQAGWPVILHEMRSVEEERLTPAHHTDQLAELVCSNSFGAQASDRAAGLLHAELRQLGSIIIRKADEHQVPAGGALAVDRGVFSRNLTETLAEHPNVELRRGEVPTLPIDGTVVLTSGPLTSAALTESLHQFTGQDYLSFFDAASPIIVGESINRDVAFLASRYDRGEAAYLNCPMNREQYLAFWQALCAAEQAELKDFEKETAKFFEGCLPIEEMARRGEDTMRYGPLKPVGLFDARYGDFKAPENQKYRPYAVAQLRQEDKAGKLWNLVGFQTNLRWGEQKRVFQMIPGLESAEFVRMGVMHRNTFINAPELLHPTLQFKQRPTLLAAGQLIGTEGYTAATAGGWLAGTNAVRLAQGLNPVVLPTTTMSGSLFEFISSATPKHFQPMPPNFGIIPDLPQRVRNKRERYGVYRDRALADLTAWIAEPSLFRQTVAANSASM.

FAD is bound at residue 11 to 16 (GGGLAG).

This sequence belongs to the MnmG family. TrmFO subfamily. Requires FAD as cofactor.

The protein resides in the cytoplasm. It carries out the reaction uridine(54) in tRNA + (6R)-5,10-methylene-5,6,7,8-tetrahydrofolate + NADH + H(+) = 5-methyluridine(54) in tRNA + (6S)-5,6,7,8-tetrahydrofolate + NAD(+). It catalyses the reaction uridine(54) in tRNA + (6R)-5,10-methylene-5,6,7,8-tetrahydrofolate + NADPH + H(+) = 5-methyluridine(54) in tRNA + (6S)-5,6,7,8-tetrahydrofolate + NADP(+). Its function is as follows. Catalyzes the folate-dependent formation of 5-methyl-uridine at position 54 (M-5-U54) in all tRNAs. In Acaryochloris marina (strain MBIC 11017), this protein is Methylenetetrahydrofolate--tRNA-(uracil-5-)-methyltransferase TrmFO.